An 85-amino-acid chain; its full sequence is Cytochrome c6 (85 aa).

Cysteine 14, cysteine 17, histidine 18, and methionine 58 together coordinate heme c.

This sequence belongs to the cytochrome c family. PetJ subfamily. In terms of assembly, monomer. Binds 1 heme c group covalently per subunit.

Its subcellular location is the cellular thylakoid lumen. In terms of biological role, functions as an electron carrier between membrane-bound cytochrome b6-f and photosystem I in oxygenic photosynthesis. The protein is Cytochrome c6 (petJ) of Leptolyngbya boryana (Plectonema boryanum).